Consider the following 339-residue polypeptide: AB hydrolase superfamily protein B1A11.02 (339 aa).

This sequence belongs to the AB hydrolase superfamily.

The polypeptide is AB hydrolase superfamily protein B1A11.02 (Schizosaccharomyces pombe (strain 972 / ATCC 24843) (Fission yeast)).